Consider the following 106-residue polypeptide: Malonate decarboxylase acyl carrier protein (106 aa).

S28 carries the post-translational modification O-(phosphoribosyl dephospho-coenzyme A)serine.

This sequence belongs to the MdcC family. Covalently binds the prosthetic group of malonate decarboxylase.

The protein resides in the cytoplasm. Subunit of malonate decarboxylase, it is an acyl carrier protein to which acetyl and malonyl thioester residues are bound via a 2'-(5''-phosphoribosyl)-3'-dephospho-CoA prosthetic group and turn over during the catalytic mechanism. This Stenotrophomonas maltophilia (strain R551-3) protein is Malonate decarboxylase acyl carrier protein.